The following is an 859-amino-acid chain: MALLSSSLSSHIPTGAHHLTLNAYANTQCIPHFFSTLNAGTSAGKRSSLYLRWGKGSNKIIACVGEDSVSAPTLLKREFPPGFWKDHVIDSLTSSHKVAASDEKRIETLISEIKNMFRSMGYGETNPSAYDTAWVARIPAVDGSEQPEFPETLEWILQNQLKDGSWGEGFYFLAYDRILATLACIITLTLWRTGEIQVQKGIEFFKTQAVKIEDEADSHRPSGFEIVFPAMLKEAKVLGLDLPYELPFIKKIIEKREAKLERLPTNILYALPTTLLYSLEGLQEIVDWQKIIKLQSKDGSFLTSPASTAAVFMRTGNKKCLEFLNFVLKKFGNHVPCHYPLDLFERLWAVDTVERLGIDRHFKEEIKDALDYVYSHWDERGIGWARENLVPDIDDTAMGLRILRLHGYNVSSDVLKTFRDENGEFFCFLGQTQRGVTDMLNVNRCSHVAFPGETIMEEAKTCTERYLRNALEDVGAFDKWALKKNIRGEVEYALKYPWHRSMPRLEARSYIEHYGPNDVWLGKTMYMMPYISNEKYLELAKLDFNHVQSLHQKELRDLRRWWTSSGFTELKFTRERVTEIYFSPASFMFEPEFATCRAVYTKTSNFTVILDDLYDAHGTLDDLKLFSDSVKKWDLSLVDRMPEDMKICFMGFYNTFNEIAEEGRKRQGRDVLGYIRNVWEIQLEAYTKEAEWSAARYVPSFDEYIENASVSIALGTVVLISALFTGEILTDDVLSKIGRGSRFLQLMGLTGRLVNDTKTYEAERGQGEVASAVQCYMKDHPEISEEEALKHVYTVMENALDELNREFVNNREVPDSCRRLVFETARIMQLFYMDGDGLTLSHETEIKEHVKNCLFHPVA.

The transit peptide at 1 to 52 directs the protein to the chloroplast; that stretch reads MALLSSSLSSHIPTGAHHLTLNAYANTQCIPHFFSTLNAGTSAGKRSSLYLR. Mg(2+)-binding residues include Asp-392, Asp-394, Asp-611, Asp-615, Asn-755, and Glu-763. The DXDD motif motif lies at 392-395; sequence DIDD. The short motif at 611–615 is the DDXXD motif element; sequence DDLYD.

Belongs to the terpene synthase family. Tpsd subfamily. It depends on Mg(2+) as a cofactor. The cofactor is Mn(2+).

The protein resides in the plastid. Its subcellular location is the chloroplast. It carries out the reaction (+)-copalyl diphosphate = abieta-8(14),12-diene + diphosphate. It catalyses the reaction (+)-copalyl diphosphate = abieta-7,13-diene + diphosphate. The protein operates within secondary metabolite biosynthesis; terpenoid biosynthesis. It functions in the pathway terpene metabolism; oleoresin biosynthesis. Its function is as follows. Terpene synthase (di-TPS) involved in the biosynthesis of diterpene natural products included in conifer oleoresin secretions and volatile emissions; these compounds contribute to biotic and abiotic stress defense against herbivores and pathogens. Catalyzes the conversion of (+)-copalyl diphosphate ((+)-CPP) to isopimaradiene. The sequence is that of Bifunctional levopimaradiene synthase, chloroplastic from Picea sitchensis (Sitka spruce).